The following is a 484-amino-acid chain: Aspartyl/glutamyl-tRNA(Asn/Gln) amidotransferase subunit B (484 aa).

This sequence belongs to the GatB/GatE family. GatB subfamily. In terms of assembly, heterotrimer of A, B and C subunits.

The catalysed reaction is L-glutamyl-tRNA(Gln) + L-glutamine + ATP + H2O = L-glutaminyl-tRNA(Gln) + L-glutamate + ADP + phosphate + H(+). The enzyme catalyses L-aspartyl-tRNA(Asn) + L-glutamine + ATP + H2O = L-asparaginyl-tRNA(Asn) + L-glutamate + ADP + phosphate + 2 H(+). Its function is as follows. Allows the formation of correctly charged Asn-tRNA(Asn) or Gln-tRNA(Gln) through the transamidation of misacylated Asp-tRNA(Asn) or Glu-tRNA(Gln) in organisms which lack either or both of asparaginyl-tRNA or glutaminyl-tRNA synthetases. The reaction takes place in the presence of glutamine and ATP through an activated phospho-Asp-tRNA(Asn) or phospho-Glu-tRNA(Gln). In Cupriavidus metallidurans (strain ATCC 43123 / DSM 2839 / NBRC 102507 / CH34) (Ralstonia metallidurans), this protein is Aspartyl/glutamyl-tRNA(Asn/Gln) amidotransferase subunit B.